Here is a 183-residue protein sequence, read N- to C-terminus: Translation initiation factor IF-3 (183 aa).

It belongs to the IF-3 family. As to quaternary structure, monomer.

The protein resides in the cytoplasm. Its function is as follows. IF-3 binds to the 30S ribosomal subunit and shifts the equilibrium between 70S ribosomes and their 50S and 30S subunits in favor of the free subunits, thus enhancing the availability of 30S subunits on which protein synthesis initiation begins. This Serratia marcescens protein is Translation initiation factor IF-3.